We begin with the raw amino-acid sequence, 346 residues long: Cyclin-dependent kinase 7 (346 aa).

Alanine 2 carries the post-translational modification N-acetylalanine. Serine 7 carries the phosphoserine modification. Positions 12–295 (YEKLDFLGEG…ATQALKMKYF (284 aa)) constitute a Protein kinase domain. Residues 18–26 (LGEGQFATV) and lysine 41 each bind ATP. The Proton acceptor role is filled by aspartate 137. Residue serine 164 is modified to Phosphoserine; by CDK1 and CDK2. Threonine 170 bears the Phosphothreonine; by CDK2 mark. Position 321 is a phosphoserine (serine 321).

The protein belongs to the protein kinase superfamily. CMGC Ser/Thr protein kinase family. CDC2/CDKX subfamily. As to quaternary structure, associates primarily with cyclin-H (CCNH) and MAT1 to form the CAK complex. CAK can further associate with the core-TFIIH to form the TFIIH basal transcription factor; this complex is sensitive to UV light. The CAK complex binds to p53/TP53 in response to DNA damage. Interacts with CDK2, SF1/NR5A1, PUF60 and PRKCI. Interacts with HINT1. Phosphorylation of Ser-164 during mitosis inactivates the enzyme. Phosphorylation of Thr-170 is required for activity. Phosphorylated at Ser-164 and Thr-170 by CDK2. In terms of tissue distribution, ubiquitous.

The protein localises to the nucleus. It localises to the cytoplasm. Its subcellular location is the perinuclear region. It carries out the reaction L-seryl-[protein] + ATP = O-phospho-L-seryl-[protein] + ADP + H(+). The catalysed reaction is L-threonyl-[protein] + ATP = O-phospho-L-threonyl-[protein] + ADP + H(+). It catalyses the reaction [DNA-directed RNA polymerase] + ATP = phospho-[DNA-directed RNA polymerase] + ADP + H(+). Its activity is regulated as follows. Inactivated by phosphorylation. Repressed by roscovitine (seliciclib, CYC202), R547 (Ro-4584820) and SNS-032 (BMS-387032). The association of p53/TP53 to the CAK complex in response to DNA damage reduces kinase activity toward CDK2 and RNA polymerase II repetitive C-terminal domain (CTD), thus stopping cell cycle progression. The inactivation by roscovitine promotes caspase-mediated apoptosis in leukemic cells. Specifically inactivated by THZ1. In terms of biological role, serine/threonine kinase involved in cell cycle control and in RNA polymerase II-mediated RNA transcription. Cyclin-dependent kinases (CDKs) are activated by the binding to a cyclin and mediate the progression through the cell cycle. Each different complex controls a specific transition between 2 subsequent phases in the cell cycle. Required for both activation and complex formation of CDK1/cyclin-B during G2-M transition, and for activation of CDK2/cyclins during G1-S transition (but not complex formation). CDK7 is the catalytic subunit of the CDK-activating kinase (CAK) complex. Phosphorylates SPT5/SUPT5H, SF1/NR5A1, POLR2A, p53/TP53, CDK1, CDK2, CDK4, CDK6 and CDK11B/CDK11. Initiates transcription by RNA polymerase II by mediating phosphorylation of POLR2A at 'Ser-5' of the repetitive C-terminal domain (CTD) when POLR2A is in complex with DNA, promoting dissociation from DNA and initiation. CAK activates the cyclin-associated kinases CDK1, CDK2, CDK4 and CDK6 by threonine phosphorylation, thus regulating cell cycle progression. CAK complexed to the core-TFIIH basal transcription factor activates RNA polymerase II by serine phosphorylation of the CTD of POLR2A, allowing its escape from the promoter and elongation of the transcripts. Its expression and activity are constant throughout the cell cycle. Upon DNA damage, triggers p53/TP53 activation by phosphorylation, but is inactivated in turn by p53/TP53; this feedback loop may lead to an arrest of the cell cycle and of the transcription, helping in cell recovery, or to apoptosis. Required for DNA-bound peptides-mediated transcription and cellular growth inhibition. This Homo sapiens (Human) protein is Cyclin-dependent kinase 7 (CDK7).